Reading from the N-terminus, the 131-residue chain is Small ribosomal subunit protein uS8 (131 aa).

It belongs to the universal ribosomal protein uS8 family. As to quaternary structure, part of the 30S ribosomal subunit. Contacts proteins S5 and S12.

In terms of biological role, one of the primary rRNA binding proteins, it binds directly to 16S rRNA central domain where it helps coordinate assembly of the platform of the 30S subunit. The protein is Small ribosomal subunit protein uS8 of Acholeplasma laidlawii (strain PG-8A).